The sequence spans 361 residues: Peptide chain release factor 1 (361 aa).

Gln237 bears the N5-methylglutamine mark. The segment covering 285 to 296 has biased composition (basic and acidic residues); that stretch reads DEKRRSAEESTR. The disordered stretch occupies residues 285 to 305; it reads DEKRRSAEESTRRNLVGSGDR.

This sequence belongs to the prokaryotic/mitochondrial release factor family. In terms of processing, methylated by PrmC. Methylation increases the termination efficiency of RF1.

It localises to the cytoplasm. Functionally, peptide chain release factor 1 directs the termination of translation in response to the peptide chain termination codons UAG and UAA. The chain is Peptide chain release factor 1 from Shewanella sediminis (strain HAW-EB3).